The following is a 759-amino-acid chain: Mitogen-activated protein kinase kinase kinase 1a (759 aa).

Basic and acidic residues-rich tracts occupy residues 1 to 17 (MIEERGSSRGSREDRGS), 25 to 36 (SFEDKGSSHDWK), and 52 to 64 (AKKDRNYDAKVDS). Disordered regions lie at residues 1-90 (MIEE…NLSK), 122-160 (LGIEASDWESRRKSAVYSRPTSPPRVSHDTGQSSYSHDF), 165-184 (SRVDSSLESPPLSPRGLAPM), and 195-239 (RKHR…PDPL). The segment covering 72-85 (VHSTSSPRLSPASS) has biased composition (low complexity). Positions 426-679 (WAKGEFLGSG…CDMLLAHPFI (254 aa)) constitute a Protein kinase domain. Residues 432–440 (LGSGTFGSV) and K454 each bind ATP. The Proton acceptor role is filled by D549.

The protein belongs to the protein kinase superfamily. STE Ser/Thr protein kinase family. MAP kinase kinase kinase subfamily.

It localises to the cell membrane. It catalyses the reaction L-seryl-[protein] + ATP = O-phospho-L-seryl-[protein] + ADP + H(+). It carries out the reaction L-threonyl-[protein] + ATP = O-phospho-L-threonyl-[protein] + ADP + H(+). The CERK1, MEKK1a/b, MKK1a/b/c and MPK4a/b proteins are involved in pathogen defense. The pathway induces rapid growth inhibition, cell wall depositions and accumulation of defense-related transcripts. This protein is required for responses to chitin and acts redundantly with MEKK1b. The protein is Mitogen-activated protein kinase kinase kinase 1a of Physcomitrium patens (Spreading-leaved earth moss).